The sequence spans 322 residues: Phosphatidylserine decarboxylase proenzyme (322 aa).

Active-site charge relay system; for autoendoproteolytic cleavage activity residues include Asp90, His147, and Ser254. The active-site Schiff-base intermediate with substrate; via pyruvic acid; for decarboxylase activity is the Ser254. Ser254 bears the Pyruvic acid (Ser); by autocatalysis mark. Residues 292–322 (TPDAEPSPLPAEEIEAEHDASPLVDDKKDQV) form a disordered region. Residues 308-322 (EHDASPLVDDKKDQV) show a composition bias toward basic and acidic residues.

It belongs to the phosphatidylserine decarboxylase family. PSD-B subfamily. Prokaryotic type I sub-subfamily. In terms of assembly, heterodimer of a large membrane-associated beta subunit and a small pyruvoyl-containing alpha subunit. The cofactor is pyruvate. Is synthesized initially as an inactive proenzyme. Formation of the active enzyme involves a self-maturation process in which the active site pyruvoyl group is generated from an internal serine residue via an autocatalytic post-translational modification. Two non-identical subunits are generated from the proenzyme in this reaction, and the pyruvate is formed at the N-terminus of the alpha chain, which is derived from the carboxyl end of the proenzyme. The autoendoproteolytic cleavage occurs by a canonical serine protease mechanism, in which the side chain hydroxyl group of the serine supplies its oxygen atom to form the C-terminus of the beta chain, while the remainder of the serine residue undergoes an oxidative deamination to produce ammonia and the pyruvoyl prosthetic group on the alpha chain. During this reaction, the Ser that is part of the protease active site of the proenzyme becomes the pyruvoyl prosthetic group, which constitutes an essential element of the active site of the mature decarboxylase.

Its subcellular location is the cell membrane. It carries out the reaction a 1,2-diacyl-sn-glycero-3-phospho-L-serine + H(+) = a 1,2-diacyl-sn-glycero-3-phosphoethanolamine + CO2. Its pathway is phospholipid metabolism; phosphatidylethanolamine biosynthesis; phosphatidylethanolamine from CDP-diacylglycerol: step 2/2. Functionally, catalyzes the formation of phosphatidylethanolamine (PtdEtn) from phosphatidylserine (PtdSer). In Escherichia coli O7:K1 (strain IAI39 / ExPEC), this protein is Phosphatidylserine decarboxylase proenzyme.